We begin with the raw amino-acid sequence, 92 residues long: MLLQLQIQLFASKKGAGSTRNGRDSHSKRLGAKLSDGQFAKAGAIIYRQRGTKIHPGFNVGRGGDDTLFAKMSGIIKFEKKHGRKKVSVYLQ.

Positions 1–10 are excised as a propeptide; the sequence is MLLQLQIQLF.

It belongs to the bacterial ribosomal protein bL27 family. Post-translationally, the N-terminus is cleaved by ribosomal processing cysteine protease Prp.

This is Large ribosomal subunit protein bL27 from Aster yellows witches'-broom phytoplasma (strain AYWB).